The following is a 370-amino-acid chain: Flagellar P-ring protein (370 aa).

The first 21 residues, 1-21 (MRLFSVVLAVFTLLLPSQAFA), serve as a signal peptide directing secretion.

It belongs to the FlgI family. As to quaternary structure, the basal body constitutes a major portion of the flagellar organelle and consists of four rings (L,P,S, and M) mounted on a central rod.

The protein resides in the periplasm. It localises to the bacterial flagellum basal body. In terms of biological role, assembles around the rod to form the L-ring and probably protects the motor/basal body from shearing forces during rotation. The protein is Flagellar P-ring protein of Alteromonas mediterranea (strain DSM 17117 / CIP 110805 / LMG 28347 / Deep ecotype).